A 79-amino-acid polypeptide reads, in one-letter code: Large ribosomal subunit protein bL28 (79 aa).

The protein belongs to the bacterial ribosomal protein bL28 family.

The protein is Large ribosomal subunit protein bL28 of Porphyromonas gingivalis (strain ATCC 33277 / DSM 20709 / CIP 103683 / JCM 12257 / NCTC 11834 / 2561).